A 202-amino-acid polypeptide reads, in one-letter code: Ribonuclease HII (202 aa).

In terms of domain architecture, RNase H type-2 spans 18–202; that stretch reads GQYAGVDEVG…KSFRPVREAM (185 aa). A divalent metal cation is bound by residues aspartate 24, glutamate 25, and aspartate 116.

Belongs to the RNase HII family. Mn(2+) is required as a cofactor. It depends on Mg(2+) as a cofactor.

Its subcellular location is the cytoplasm. It catalyses the reaction Endonucleolytic cleavage to 5'-phosphomonoester.. Endonuclease that specifically degrades the RNA of RNA-DNA hybrids. This Shewanella piezotolerans (strain WP3 / JCM 13877) protein is Ribonuclease HII.